The sequence spans 379 residues: Alcohol dehydrogenase 3 (379 aa).

Residues Cys47, Thr49, His69, Cys99, Cys102, Cys105, Cys113, and Cys177 each coordinate Zn(2+). Residues Thr49 and His69 each contribute to the an alcohol site. Thr49 provides a ligand contact to NAD(+). NAD(+) contacts are provided by residues 202–207 (GLGAVG), Asp226, Lys231, Thr272, Val295, 295–297 (VGV), Phe322, and Arg372.

This sequence belongs to the zinc-containing alcohol dehydrogenase family. In terms of assembly, homodimer. It depends on Zn(2+) as a cofactor.

It localises to the cytoplasm. The enzyme catalyses a primary alcohol + NAD(+) = an aldehyde + NADH + H(+). It catalyses the reaction a secondary alcohol + NAD(+) = a ketone + NADH + H(+). This chain is Alcohol dehydrogenase 3 (ADH3), found in Hordeum vulgare (Barley).